The chain runs to 654 residues: Tetratricopeptide repeat protein 30 homolog (654 aa).

TPR repeat units follow at residues 10-43 (DGEY…STTR), 44-76 (AGLS…VPDV), 145-178 (ASTK…GGFN), 180-212 (HVAY…GIRN), 393-426 (CRSA…RAWI), 452-485 (SWRL…NYDD), and 535-568 (CIVN…GSGA).

It belongs to the TTC30/dfy-1/fleer family.

The protein resides in the cell projection. It localises to the cilium. In terms of biological role, required for polyglutamylation of axonemal tubulin in sensory cilia. Plays a role in anterograde intraflagellar transport (IFT), the process by which cilia precursors are transported from the base of the cilium to the site of their incorporation at the tip. This Anopheles gambiae (African malaria mosquito) protein is Tetratricopeptide repeat protein 30 homolog.